Reading from the N-terminus, the 477-residue chain is Glutamyl-tRNA reductase (477 aa).

Substrate-binding positions include 49-52 (TCNR), Ser-109, 114-116 (EQQ), and Gln-120. The Nucleophile role is filled by Cys-50. Residue 189–194 (GAGAMG) participates in NADP(+) binding.

Belongs to the glutamyl-tRNA reductase family. Homodimer.

The enzyme catalyses (S)-4-amino-5-oxopentanoate + tRNA(Glu) + NADP(+) = L-glutamyl-tRNA(Glu) + NADPH + H(+). It functions in the pathway porphyrin-containing compound metabolism; protoporphyrin-IX biosynthesis; 5-aminolevulinate from L-glutamyl-tRNA(Glu): step 1/2. Functionally, catalyzes the NADPH-dependent reduction of glutamyl-tRNA(Glu) to glutamate 1-semialdehyde (GSA). The protein is Glutamyl-tRNA reductase of Nocardia farcinica (strain IFM 10152).